We begin with the raw amino-acid sequence, 248 residues long: MTSHPRDAPQFYLTAPSPCPYLPGQYERKVFTHLVGRRARDLNEILTQGGFRRSQTIAYRPACETCRACISVRVIVGDFVPSASQRRVMRRNRDLVGQPQPNRPASEQYALFRRYLDARHGDGGMVDMTVLDYAMMVEDSHVETHLVVYRKRGPDTAINGRGVGAPIAICLTDVLSDGLSMVYSFYEPSEADRSLGTYMILDHIERARLLGLPYLYLGYWVEGSRKMDYKAKFGPQERLMPQGWVRVE.

This sequence belongs to the R-transferase family. Bpt subfamily.

It localises to the cytoplasm. The enzyme catalyses N-terminal L-glutamyl-[protein] + L-leucyl-tRNA(Leu) = N-terminal L-leucyl-L-glutamyl-[protein] + tRNA(Leu) + H(+). The catalysed reaction is N-terminal L-aspartyl-[protein] + L-leucyl-tRNA(Leu) = N-terminal L-leucyl-L-aspartyl-[protein] + tRNA(Leu) + H(+). Functions in the N-end rule pathway of protein degradation where it conjugates Leu from its aminoacyl-tRNA to the N-termini of proteins containing an N-terminal aspartate or glutamate. The sequence is that of Aspartate/glutamate leucyltransferase from Methylobacterium nodulans (strain LMG 21967 / CNCM I-2342 / ORS 2060).